The sequence spans 580 residues: 9,13-epoxylabda-14-ene synthase, chloroplastic (580 aa).

A chloroplast-targeting transit peptide spans Met-1–Thr-32. The Mg(2+) site is built by Asp-322, Asp-326, Asn-466, Thr-470, and Glu-474. The DDXXD motif signature appears at Asp-322–Asp-326.

Belongs to the terpene synthase family. Requires Mg(2+) as cofactor. Present in both leaves and flowers, with higher levels in leaves.

The protein localises to the plastid. Its subcellular location is the chloroplast. The enzyme catalyses peregrinol diphosphate = (13R)-9,13-epoxylabd-14-ene + diphosphate. The catalysed reaction is (+)-copalyl diphosphate = miltiradiene + diphosphate. It catalyses the reaction 8-hydroxycopalyl diphosphate = (13R)-manoyl oxide + diphosphate. The protein operates within secondary metabolite biosynthesis; terpenoid biosynthesis. In terms of biological role, involved in the biosynthesis of labdane-type diterpenoid including marrubiin and other labdane-related furanoid diterpenoids with potential applications as anti-diabetics, analgesics or vasorelaxants. Terpene synthase the catalyzes the conversion of peregrinol diphosphate to 9,13(R)-epoxy-labd-14-ene, from (+)-copalyl diphosphate ((+)-CPP) to miltiradiene and from 8-hydroxycopalyl diphosphate (LPP, labda-13-en-8-ol diphosphate) to manoyl oxide. This chain is 9,13-epoxylabda-14-ene synthase, chloroplastic, found in Marrubium vulgare (White horehound).